We begin with the raw amino-acid sequence, 162 residues long: Tegument protein BLRF2 (162 aa).

Positions 12–43 (VKAVDMSMEDMAARLARLESENKALKQQVLRG) form a coiled coil. The tract at residues 121–162 (GAKGQPSPGEGTRLRESNDPNATRRARSRSRGREAKKVQISD) is disordered. Positions 151–162 (RGREAKKVQISD) are enriched in basic and acidic residues.

Belongs to the herpesviridae BLRF2 family. As to quaternary structure, homooligomer; homooligomerizes and binds double-stranded DNA (dsDNA) cooperatively. Interacts with host CGAS.

The protein localises to the virion tegument. It is found in the host cytoplasm. Its function is as follows. Plays a role in the inhibition of host innate immune system by targeting the CGAS enzymatic activity which is the principal cytosolic DNA sensor that detects invading viral DNA. Acts by inhibiting CGAS-DNA phase separation: directly binds double-stranded DNA (dsDNA) in a length dependent but sequence independent manner and is able to form DNA-induced phase separation in infected cells. DNA phase separation of ORF52 mediates disruption of liquid-like droplets in which CGAS is activated, thereby preventing CGAS activity. The protein is Tegument protein BLRF2 of Epstein-Barr virus (strain GD1) (HHV-4).